Reading from the N-terminus, the 167-residue chain is 2-C-methyl-D-erythritol 2,4-cyclodiphosphate synthase (167 aa).

Residues D10 and H12 each coordinate a divalent metal cation. 4-CDP-2-C-methyl-D-erythritol 2-phosphate-binding positions include 10–12 (DVH) and 36–37 (HS). H44 is an a divalent metal cation binding site. Residues 58-60 (NIG), 63-67 (FPNTN), 134-137 (TTSE), F141, and R144 contribute to the 4-CDP-2-C-methyl-D-erythritol 2-phosphate site.

Belongs to the IspF family. In terms of assembly, homotrimer. Requires a divalent metal cation as cofactor.

It catalyses the reaction 4-CDP-2-C-methyl-D-erythritol 2-phosphate = 2-C-methyl-D-erythritol 2,4-cyclic diphosphate + CMP. The protein operates within isoprenoid biosynthesis; isopentenyl diphosphate biosynthesis via DXP pathway; isopentenyl diphosphate from 1-deoxy-D-xylulose 5-phosphate: step 4/6. Functionally, involved in the biosynthesis of isopentenyl diphosphate (IPP) and dimethylallyl diphosphate (DMAPP), two major building blocks of isoprenoid compounds. Catalyzes the conversion of 4-diphosphocytidyl-2-C-methyl-D-erythritol 2-phosphate (CDP-ME2P) to 2-C-methyl-D-erythritol 2,4-cyclodiphosphate (ME-CPP) with a corresponding release of cytidine 5-monophosphate (CMP). In Azobacteroides pseudotrichonymphae genomovar. CFP2, this protein is 2-C-methyl-D-erythritol 2,4-cyclodiphosphate synthase.